We begin with the raw amino-acid sequence, 196 residues long: dITP/XTP pyrophosphatase (196 aa).

Position 10–15 (10–15 (TTNPHK)) interacts with substrate. Residue Asp-68 is the Proton acceptor of the active site. Asp-68 is a Mg(2+) binding site. Substrate is bound by residues Ser-69, 148–151 (FGYD), and 175–176 (HR).

The protein belongs to the HAM1 NTPase family. In terms of assembly, homodimer. Requires Mg(2+) as cofactor.

The catalysed reaction is XTP + H2O = XMP + diphosphate + H(+). It catalyses the reaction dITP + H2O = dIMP + diphosphate + H(+). It carries out the reaction ITP + H2O = IMP + diphosphate + H(+). Pyrophosphatase that catalyzes the hydrolysis of nucleoside triphosphates to their monophosphate derivatives, with a high preference for the non-canonical purine nucleotides XTP (xanthosine triphosphate), dITP (deoxyinosine triphosphate) and ITP. Seems to function as a house-cleaning enzyme that removes non-canonical purine nucleotides from the nucleotide pool, thus preventing their incorporation into DNA/RNA and avoiding chromosomal lesions. The protein is dITP/XTP pyrophosphatase of Thermotoga maritima (strain ATCC 43589 / DSM 3109 / JCM 10099 / NBRC 100826 / MSB8).